The following is a 190-amino-acid chain: Probable molybdenum cofactor guanylyltransferase (190 aa).

Residues L9–G11, K21, D65, and D94 each bind GTP. D94 serves as a coordination point for Mg(2+).

It belongs to the MobA family. Requires Mg(2+) as cofactor.

The protein localises to the cytoplasm. The enzyme catalyses Mo-molybdopterin + GTP + H(+) = Mo-molybdopterin guanine dinucleotide + diphosphate. Transfers a GMP moiety from GTP to Mo-molybdopterin (Mo-MPT) cofactor (Moco or molybdenum cofactor) to form Mo-molybdopterin guanine dinucleotide (Mo-MGD) cofactor. This Flavobacterium johnsoniae (strain ATCC 17061 / DSM 2064 / JCM 8514 / BCRC 14874 / CCUG 350202 / NBRC 14942 / NCIMB 11054 / UW101) (Cytophaga johnsonae) protein is Probable molybdenum cofactor guanylyltransferase.